The chain runs to 551 residues: Eukaryotic translation initiation factor 3 subunit D-2 (551 aa).

Residues 91–154 are disordered; that stretch reads TKPYQRGRYR…RNTQNMGRRF (64 aa). A compositionally biased stretch (basic residues) spans 95–113; that stretch reads QRGRYRPNMRNNVRSRGRT. The span at 121-136 shows a compositional bias: low complexity; sequence ASLGGSTAGGATASTT. Residues 290 to 304 form an RNA gate region; the sequence is QFDLLTVNETSVEPP. Positions 527-551 are disordered; that stretch reads PENAFDSDGDEEEESSDPLSNSNDN. Over residues 531 to 542 the composition is skewed to acidic residues; it reads FDSDGDEEEESS.

Belongs to the eIF-3 subunit D family. In terms of assembly, component of the eukaryotic translation initiation factor 3 (eIF-3) complex. The eIF-3 complex interacts with pix.

The protein resides in the cytoplasm. MRNA cap-binding component of the eukaryotic translation initiation factor 3 (eIF-3) complex, which is involved in protein synthesis of a specialized repertoire of mRNAs and, together with other initiation factors, stimulates binding of mRNA and methionyl-tRNAi to the 40S ribosome. The eIF-3 complex specifically targets and initiates translation of a subset of mRNAs involved in cell proliferation. In the eIF-3 complex, eif3d specifically recognizes and binds the 7-methylguanosine cap of a subset of mRNAs. The polypeptide is Eukaryotic translation initiation factor 3 subunit D-2 (Drosophila melanogaster (Fruit fly)).